The primary structure comprises 161 residues: Glycine cleavage system H protein 2 (161 aa).

The region spanning 34 to 116 is the Lipoyl-binding domain; it reads TVTVGVTDIG…YGEGWIAKLK (83 aa). N6-lipoyllysine is present on lysine 75.

It belongs to the GcvH family. The glycine cleavage system is composed of four proteins: P, T, L and H. (R)-lipoate serves as cofactor.

In terms of biological role, the glycine cleavage system catalyzes the degradation of glycine. The H protein shuttles the methylamine group of glycine from the P protein to the T protein. The sequence is that of Glycine cleavage system H protein 2 from Aquifex aeolicus (strain VF5).